A 79-amino-acid chain; its full sequence is Large ribosomal subunit protein bL31 (79 aa).

Zn(2+) is bound by residues C16, C18, C37, and C40.

This sequence belongs to the bacterial ribosomal protein bL31 family. Type A subfamily. In terms of assembly, part of the 50S ribosomal subunit. Zn(2+) serves as cofactor.

In terms of biological role, binds the 23S rRNA. The polypeptide is Large ribosomal subunit protein bL31 (Coxiella burnetii (strain CbuG_Q212) (Coxiella burnetii (strain Q212))).